Here is a 393-residue protein sequence, read N- to C-terminus: Protein TsgA (393 aa).

Helical transmembrane passes span 11–31 (WISF…GMVM), 51–71 (FLNA…EIVP), 78–98 (FGFL…SLAL), 101–121 (TAMF…TFLI), 140–160 (FFSM…AHSI), 162–182 (WYWV…LTFG), 206–226 (IGVL…LGFI), 245–265 (TLVS…SFIL), 273–293 (ILTV…TGTP), 297–317 (AWSI…IITL), 332–352 (FVLT…GPIV), and 361–381 (LLTA…LGFV).

The protein belongs to the major facilitator superfamily. TsgA family.

It is found in the cell inner membrane. This is Protein TsgA from Shigella boydii serotype 18 (strain CDC 3083-94 / BS512).